The chain runs to 247 residues: 3,4-dihydroxy-2-butanone 4-phosphate synthase (247 aa).

D-ribulose 5-phosphate-binding positions include Arg38–Glu39, Asp43, Arg179–Thr183, and Glu203. Glu39 provides a ligand contact to Mg(2+).

This sequence belongs to the DHBP synthase family. In terms of assembly, homodimer. Requires Mg(2+) as cofactor. Mn(2+) is required as a cofactor.

The catalysed reaction is D-ribulose 5-phosphate = (2S)-2-hydroxy-3-oxobutyl phosphate + formate + H(+). The protein operates within cofactor biosynthesis; riboflavin biosynthesis; 2-hydroxy-3-oxobutyl phosphate from D-ribulose 5-phosphate: step 1/1. Functionally, catalyzes the conversion of D-ribulose 5-phosphate to formate and 3,4-dihydroxy-2-butanone 4-phosphate. The sequence is that of 3,4-dihydroxy-2-butanone 4-phosphate synthase from Methanosarcina mazei (strain ATCC BAA-159 / DSM 3647 / Goe1 / Go1 / JCM 11833 / OCM 88) (Methanosarcina frisia).